Consider the following 66-residue polypeptide: DNA-directed RNA polymerase subunit Rpo10 (66 aa).

Zn(2+)-binding residues include Cys7, Cys10, Cys44, and Cys45.

The protein belongs to the archaeal Rpo10/eukaryotic RPB10 RNA polymerase subunit family. As to quaternary structure, part of the 13-subunit RNA polymerase complex. Requires Zn(2+) as cofactor.

It localises to the cytoplasm. It catalyses the reaction RNA(n) + a ribonucleoside 5'-triphosphate = RNA(n+1) + diphosphate. DNA-dependent RNA polymerase (RNAP) catalyzes the transcription of DNA into RNA using the four ribonucleoside triphosphates as substrates. In Sulfolobus acidocaldarius (strain ATCC 33909 / DSM 639 / JCM 8929 / NBRC 15157 / NCIMB 11770), this protein is DNA-directed RNA polymerase subunit Rpo10.